The following is a 61-amino-acid chain: Small ribosomal subunit protein uS14 (61 aa).

Residues Cys24, Cys27, Cys40, and Cys43 each coordinate Zn(2+).

The protein belongs to the universal ribosomal protein uS14 family. Zinc-binding uS14 subfamily. In terms of assembly, part of the 30S ribosomal subunit. Contacts proteins S3 and S10. The cofactor is Zn(2+).

Binds 16S rRNA, required for the assembly of 30S particles and may also be responsible for determining the conformation of the 16S rRNA at the A site. This Clostridium botulinum (strain 657 / Type Ba4) protein is Small ribosomal subunit protein uS14.